Here is a 130-residue protein sequence, read N- to C-terminus: Riboflavin kinase (130 aa).

12–17 (GLGVGA) contributes to the CDP binding site. Mg(2+) contacts are provided by Thr-39 and Asn-41. 2 residues coordinate FMN: Thr-90 and Glu-98. 103 to 106 (KNLR) contributes to the CDP binding site.

It belongs to the archaeal riboflavin kinase family. Mg(2+) serves as cofactor.

The catalysed reaction is riboflavin + CTP = CDP + FMN + H(+). It participates in cofactor biosynthesis; FMN biosynthesis; FMN from riboflavin (CTP route): step 1/1. Catalyzes the CTP-dependent phosphorylation of riboflavin (vitamin B2) to form flavin mononucleotide (FMN). In Staphylothermus marinus (strain ATCC 43588 / DSM 3639 / JCM 9404 / F1), this protein is Riboflavin kinase.